Consider the following 320-residue polypeptide: Olfactory receptor 5C1 (320 aa).

The Extracellular segment spans residues 1–29 (MNSENLTRAAVAPAEFVLLGITNRWDLRV). The N-linked (GlcNAc...) asparagine glycan is linked to asparagine 5. Residues 30 to 50 (ALFLTCLPVYLVSLLGNMGMA) traverse the membrane as a helical segment. At 51–58 (LLIRMDAR) the chain is on the cytoplasmic side. Residues 59-79 (LHTPMYFFLANLSLLDACYSS) traverse the membrane as a helical segment. Residues 80–103 (AIGPKMLVDLLLPRATIPYTACAL) are Extracellular-facing. The cysteines at positions 101 and 193 are disulfide-linked. The chain crosses the membrane as a helical span at residues 104 to 124 (QMFVFAGLADTECCLLAAMAY). Residues 125–143 (DRYVAIRNPLLYTTAMSQR) lie on the Cytoplasmic side of the membrane. A helical membrane pass occupies residues 144–164 (LCLALLGASGLGGAVSAFVHT). Topologically, residues 165–200 (TLTFRLSFCRSRKINSFFCDIPPLLAISCSDTSLNE) are extracellular. Residues 201 to 221 (LLLFAICGFIQTATVLAITVS) form a helical membrane-spanning segment. Topologically, residues 222-241 (YGFIAGAVIHMRSVEGSRRA) are cytoplasmic. A helical membrane pass occupies residues 242 to 262 (ASTGGSHLTAVAMMYGTLIFM). At 263 to 275 (YLRPSSSYALDTD) the chain is on the extracellular side. A helical membrane pass occupies residues 276-296 (KMASVFYTLVIPSLNPLIYSL). Residues 297–320 (RNKEVKEALRQTWSRFHCPGQGSQ) lie on the Cytoplasmic side of the membrane.

The protein belongs to the G-protein coupled receptor 1 family.

It is found in the cell membrane. Odorant receptor. This Homo sapiens (Human) protein is Olfactory receptor 5C1 (OR5C1).